The chain runs to 235 residues: Small ribosomal subunit protein uS2 (235 aa).

This sequence belongs to the universal ribosomal protein uS2 family.

In Geobacillus sp. (strain WCH70), this protein is Small ribosomal subunit protein uS2.